We begin with the raw amino-acid sequence, 163 residues long: Neurotrophin-3 (163 aa).

Positions 1–3 (IQS) are cleaved as a signal peptide. Residues 4-119 (TSMDQGILTE…VLNRTSRRKR (116 aa)) constitute a propeptide that is removed on maturation. An N-linked (GlcNAc...) asparagine glycan is attached at Asn112. Residues 112–132 (NRTSRRKREGKSHRGEYSVCD) form a disordered region. Residues 123–132 (SHRGEYSVCD) are compositionally biased toward basic and acidic residues.

This sequence belongs to the NGF-beta family.

It localises to the secreted. Its function is as follows. Seems to promote the survival of visceral and proprioceptive sensory neurons. The chain is Neurotrophin-3 (NTF3) from Exiliboa placata (Oaxacan dwarf boa).